We begin with the raw amino-acid sequence, 592 residues long: Inactive metallocarboxypeptidase ecm14 (592 aa).

Residues 1 to 22 form the signal peptide; it reads MYRQDHVFVVLCAVLLAGQVTA. The propeptide occupies 23 to 175; the sequence is VPAGTGINPH…AIYESRYPTR (153 aa). The Peptidase M14 domain occupies 203-524; it reads HYQPFNVILQ…NSVLVLGHFL (322 aa). 2 residues coordinate Zn(2+): H267 and E270. Residues 267-270, R325, and 342-343 contribute to the substrate site; these read HARE and DR. C336 and C359 are joined by a disulfide. A glycan (N-linked (GlcNAc...) asparagine) is linked at N383. H399 is a binding site for Zn(2+). Position 400–401 (400–401) interacts with substrate; that stretch reads SY. N548 carries N-linked (GlcNAc...) asparagine glycosylation.

It belongs to the peptidase M14 family. It depends on Zn(2+) as a cofactor.

It is found in the vacuole. The protein resides in the secreted. Functionally, inactive carboxypeptidase that may play a role in cell wall organization and biogenesis. In Talaromyces stipitatus (strain ATCC 10500 / CBS 375.48 / QM 6759 / NRRL 1006) (Penicillium stipitatum), this protein is Inactive metallocarboxypeptidase ecm14 (ecm14).